The primary structure comprises 344 residues: Putative esterase NocK (344 aa).

The segment at residues 1–34 (MIGVTRRSGLALAVLVSSAACAGAEPVAPPPAPA) is a signal peptide (tat-type signal). Residues 265-295 (GGADERRREEARPAAAPGGTSTSRETCANPD) form a disordered region. A compositionally biased stretch (basic and acidic residues) spans 266-276 (GADERRREEAR).

It belongs to the AB hydrolase superfamily. Post-translationally, predicted to be exported by the Tat system. The position of the signal peptide cleavage has not been experimentally proven.

The polypeptide is Putative esterase NocK (Nocardia uniformis subsp. tsuyamanensis).